The primary structure comprises 431 residues: uncharacterized protein (431 aa).

Helical transmembrane passes span 33 to 53 (VARV…VIYL), 63 to 83 (FSVF…ANGL), 111 to 131 (VSGM…PLWS), 143 to 163 (VALL…LGML), 197 to 217 (LVGF…MLMT), 241 to 261 (AHSI…PVLL), 273 to 293 (GVVI…LTAM), 318 to 338 (LIGG…PWIM), 358 to 378 (AAAV…AAAL), 383 to 403 (SLGW…PLSL), and 407 to 427 (TVVA…VALA).

This sequence to M.tuberculosis Rv1510 and Rv3630.

The protein localises to the cell membrane. This is an uncharacterized protein from Mycobacterium bovis (strain ATCC BAA-935 / AF2122/97).